We begin with the raw amino-acid sequence, 128 residues long: Glycine cleavage system H protein (128 aa).

The Lipoyl-binding domain maps to 25–107 (TFKVGITDHA…YEAGWLFTVR (83 aa)). K66 is subject to N6-lipoyllysine.

It belongs to the GcvH family. As to quaternary structure, the glycine cleavage system is composed of four proteins: P, T, L and H. It depends on (R)-lipoate as a cofactor.

Its function is as follows. The glycine cleavage system catalyzes the degradation of glycine. The H protein shuttles the methylamine group of glycine from the P protein to the T protein. The protein is Glycine cleavage system H protein of Kocuria rhizophila (strain ATCC 9341 / DSM 348 / NBRC 103217 / DC2201).